The chain runs to 323 residues: MSYARIIGTGSYLPDEVITNHDLERLIDTSDEWIRERTGITERRRVAPDQTCGDLAEEAARRALEAADVSLSSIDLVIVGTCTPDRVFPSTACLLQERLGMRHGSLAFDLSAACSGFVYGLGVADQFFRTGAVRRALVIGAETMTRILDWNDRATCVLFGDGAGAVVLDRSEEPGILSTHLHSDGRYQDLLGVPWGPGQGYEKRDALGPYITMQGNEVFKVAVRTLSRIVDESLAANGLEKRDIDWLVPHQANIRIIQATARKLEMPMERVVVTVDKQGNTSAASIPMALDTAIRDGRIKRGDLLLLEAFGGGFTWGSALIRY.

Active-site residues include cysteine 114 and histidine 250. The ACP-binding stretch occupies residues 251–255 (QANIR). Asparagine 280 is an active-site residue.

The protein belongs to the thiolase-like superfamily. FabH family. As to quaternary structure, homodimer.

Its subcellular location is the cytoplasm. It catalyses the reaction malonyl-[ACP] + acetyl-CoA + H(+) = 3-oxobutanoyl-[ACP] + CO2 + CoA. It functions in the pathway lipid metabolism; fatty acid biosynthesis. In terms of biological role, catalyzes the condensation reaction of fatty acid synthesis by the addition to an acyl acceptor of two carbons from malonyl-ACP. Catalyzes the first condensation reaction which initiates fatty acid synthesis and may therefore play a role in governing the total rate of fatty acid production. Possesses both acetoacetyl-ACP synthase and acetyl transacylase activities. Its substrate specificity determines the biosynthesis of branched-chain and/or straight-chain of fatty acids. This Alkalilimnicola ehrlichii (strain ATCC BAA-1101 / DSM 17681 / MLHE-1) protein is Beta-ketoacyl-[acyl-carrier-protein] synthase III.